The chain runs to 1226 residues: AF4/FMR2 family member 3 (1226 aa).

The span at 24-37 (RNALRRKERERRNQ) shows a compositional bias: basic and acidic residues. 5 disordered regions span residues 24–65 (RNAL…GDEL), 116–164 (SRAQ…RATQ), 197–299 (ERPP…GETN), 323–496 (KVEP…SNQY), and 523–728 (IKST…SINA). Positions 42-52 (DDGTFNSSYSL) are enriched in polar residues. The span at 123 to 132 (SSICSTTTST) shows a compositional bias: low complexity. Polar residues-rich tracts occupy residues 251 to 261 (LKSSSETSVHC) and 334 to 344 (KDSQLVSSGHN). A compositionally biased stretch (low complexity) spans 381-392 (QQAAQRTALRAL). Residues 396–408 (AVVQQPNCRTSVP) show a composition bias toward polar residues. The span at 409–445 (SSKGSSSSSSSGSSSSSSDSESSSGSDSETESSSSES) shows a compositional bias: low complexity. The span at 485–496 (QNESHGSESNQY) shows a compositional bias: polar residues. Residues 523 to 533 (IKSTCKEEQRP) show a composition bias toward basic and acidic residues. 2 stretches are compositionally biased toward low complexity: residues 550-561 (PPAAVAVAVSAA) and 569-579 (CAPAENAPAPA). Positions 589–607 (RRTERTSAGDGANCHRPEE) are enriched in basic and acidic residues. Over residues 668-678 (TESSSSSSSSD) the composition is skewed to low complexity. Residues 692–705 (KAQTVAASASSGND) are compositionally biased toward polar residues. S755 is subject to Phosphoserine. Disordered regions lie at residues 783–856 (PQEP…LSAN), 879–964 (PISP…RDCK), and 1100–1138 (AAQAPSPWGASGKSTGTPSPMSPNPSPASSVGSQGSLSN). Over residues 830–842 (REIKKSQGEKDSS) the composition is skewed to basic and acidic residues. Polar residues predominate over residues 843 to 856 (SRLATSTSNTLSAN). Phosphoserine is present on S881. Residues 894 to 909 (EDLTSSSRPNGNSLFT) are compositionally biased toward polar residues.

This sequence belongs to the AF4 family. Preferentially expressed in lymphoid tissues, highest levels being found in the thymus.

It localises to the nucleus. Putative transcription activator that may function in lymphoid development and oncogenesis. Binds, in vitro, to double-stranded DNA. The sequence is that of AF4/FMR2 family member 3 from Homo sapiens (Human).